The primary structure comprises 177 residues: Zinc metalloproteinase-disintegrin-like scutiarin (177 aa).

Residues 1–63 (NPCCDAATCK…ECPADVFHKN (63 aa)) enclose the Disintegrin domain. 10 cysteine pairs are disulfide-bonded: cysteine 3-cysteine 26, cysteine 17-cysteine 23, cysteine 22-cysteine 48, cysteine 35-cysteine 55, cysteine 42-cysteine 74, cysteine 67-cysteine 79, cysteine 86-cysteine 136, cysteine 101-cysteine 147, cysteine 114-cysteine 124, and cysteine 131-cysteine 173. The D/ECD-tripeptide signature appears at 41 to 43 (ECD). 5 residues coordinate Ca(2+): aspartate 43, proline 44, glutamate 46, aspartate 58, and valine 59.

This sequence belongs to the venom metalloproteinase (M12B) family. P-III subfamily. P-IIIa sub-subfamily. As to quaternary structure, monomer. Requires Zn(2+) as cofactor. In terms of processing, glycosylated. Expressed by the venom gland.

The protein resides in the secreted. Functionally, snake venom metalloproteinase that impairs hemostasis in the envenomed animal. The polypeptide is Zinc metalloproteinase-disintegrin-like scutiarin (Crotalus scutulatus scutulatus (Mojave rattlesnake)).